Here is an 82-residue protein sequence, read N- to C-terminus: NAD(P)H-quinone oxidoreductase subunit O, organellar chromatophore (82 aa).

The protein belongs to the complex I NdhO subunit family. NDH-1 can be composed of about 15 different subunits; different subcomplexes with different compositions have been identified which probably have different functions.

The protein resides in the plastid. Its subcellular location is the organellar chromatophore thylakoid membrane. The enzyme catalyses a plastoquinone + NADH + (n+1) H(+)(in) = a plastoquinol + NAD(+) + n H(+)(out). The catalysed reaction is a plastoquinone + NADPH + (n+1) H(+)(in) = a plastoquinol + NADP(+) + n H(+)(out). NDH-1 shuttles electrons from an unknown electron donor, via FMN and iron-sulfur (Fe-S) centers, to quinones in the respiratory and/or the photosynthetic chain. The immediate electron acceptor for the enzyme in this species is believed to be plastoquinone. Couples the redox reaction to proton translocation, and thus conserves the redox energy in a proton gradient. Cyanobacterial NDH-1 also plays a role in inorganic carbon-concentration. This Paulinella chromatophora protein is NAD(P)H-quinone oxidoreductase subunit O, organellar chromatophore.